Consider the following 389-residue polypeptide: POU domain, class 5, transcription factor 3 (389 aa).

Low complexity-rich tracts occupy residues 1–18 and 145–165; these read MFSPDGGLPAAPFGLLPD and LANLGSSGSSSGAASEGGHSS. Disordered regions lie at residues 1–88 and 145–177; these read MFSP…APPA and LANLGSSGSSSGAASEGGHSSDSGDEDAPTSEE. Residues 167-177 show a composition bias toward acidic residues; that stretch reads SGDEDAPTSEE. The POU-specific domain occupies 170-244; the sequence is EDAPTSEELE…LLQRWLNEAE (75 aa). A DNA-binding region (homeobox) is located at residues 264-323; that stretch reads KRKRRTSIETNVKGTLESFFRKCVKPSPQEISQIAEDLNLDKDVVRVWFCNRRQKGKRLL.

Belongs to the POU transcription factor family.

It is found in the nucleus. In terms of biological role, required for the maintenance of pluripotency and self-renewal of embryonic stem cells. Transcriptional activator that binds the DNA consensus sequence 5'-ATGCAAAT-3'. The chain is POU domain, class 5, transcription factor 3 (POU5F3) from Gallus gallus (Chicken).